The following is a 999-amino-acid chain: Probable beta-galactosidase C (999 aa).

The N-terminal stretch at 1-21 (MFFFRFLTTVLLLFNAKLLVA) is a signal peptide. A glycan (N-linked (GlcNAc...) asparagine) is linked at Asn25. Residues Tyr80, Asn125, Glu127, and Asn185 each coordinate substrate. Glu186 serves as the catalytic Proton donor. The N-linked (GlcNAc...) asparagine glycan is linked to Asn195. Residue Tyr249 coordinates substrate. The cysteines at positions 255 and 302 are disulfide-linked. N-linked (GlcNAc...) asparagine glycosylation occurs at Asn274. Catalysis depends on Glu285, which acts as the Nucleophile. Tyr351 contributes to the substrate binding site. Asn389, Asn441, Asn512, Asn519, Asn600, Asn675, Asn713, Asn757, Asn808, and Asn897 each carry an N-linked (GlcNAc...) asparagine glycan.

Belongs to the glycosyl hydrolase 35 family.

The protein localises to the secreted. The catalysed reaction is Hydrolysis of terminal non-reducing beta-D-galactose residues in beta-D-galactosides.. Functionally, cleaves beta-linked terminal galactosyl residues from gangliosides, glycoproteins, and glycosaminoglycans. This Talaromyces marneffei (strain ATCC 18224 / CBS 334.59 / QM 7333) (Penicillium marneffei) protein is Probable beta-galactosidase C (lacC).